The following is a 275-amino-acid chain: Glutamate racemase (275 aa).

Residues 12 to 13 (DS) and 44 to 45 (YG) each bind substrate. The active-site Proton donor/acceptor is the cysteine 75. A substrate-binding site is contributed by 76–77 (NT). Residue cysteine 185 is the Proton donor/acceptor of the active site. 186–187 (TH) is a binding site for substrate.

It belongs to the aspartate/glutamate racemases family.

The catalysed reaction is L-glutamate = D-glutamate. The protein operates within cell wall biogenesis; peptidoglycan biosynthesis. In terms of biological role, provides the (R)-glutamate required for cell wall biosynthesis. The chain is Glutamate racemase from Mycolicibacterium paratuberculosis (strain ATCC BAA-968 / K-10) (Mycobacterium paratuberculosis).